Reading from the N-terminus, the 315-residue chain is Cobalamin biosynthesis protein CobD (315 aa).

5 helical membrane-spanning segments follow: residues 48 to 70, 75 to 94, 148 to 170, 208 to 230, and 292 to 314; these read IAGI…LSVQ, LHWI…TIAI, LVDG…AMLY, ITSY…SLYI, and LILL…AAYF.

Belongs to the CobD/CbiB family.

It is found in the cell membrane. It functions in the pathway cofactor biosynthesis; adenosylcobalamin biosynthesis. In terms of biological role, converts cobyric acid to cobinamide by the addition of aminopropanol on the F carboxylic group. This Leptospira interrogans serogroup Icterohaemorrhagiae serovar copenhageni (strain Fiocruz L1-130) protein is Cobalamin biosynthesis protein CobD.